The primary structure comprises 443 residues: MSQLTPREIVHELDKHIIGQDAAKRSVAIALRNRWRRQQVQDPLRQEITPKNILMIGPTGVGKTEIARRLAKLADAPFIKVEATKFTEVGYVGRDVDSIIRDLVEAAVKQSRERETQKMRARAEDHAEERILDVLLPVARETGLQMDSIEAESATRQKFRKKLREGELNDKEIEIELATPHTHMEIFAPPGMEELTTQIQGMFQNLGAERKRMRKLKIREAMKLLIDEEASKLVNDEELKLRAVQNVEQNGIVFLDEIDKITSRSETSGADVSRQGVQRDLLPLVEGTTISTKYGMIKTDHILFIASGAFHLAKPSDLIPELQGRFPIRVELTSLSAGDFVQILTNTDACLKRQYEALLETEGVRLEFTPDAVKRLAEIAFAVNEKTENIGARRLYTAMEKLLEDVSFDAEKHHGDAVVIDAAYVDKRLGDLAQSEDLARYVL.

Residues isoleucine 18, 60 to 65 (GVGKTE), aspartate 256, glutamate 321, and arginine 393 contribute to the ATP site.

Belongs to the ClpX chaperone family. HslU subfamily. As to quaternary structure, a double ring-shaped homohexamer of HslV is capped on each side by a ring-shaped HslU homohexamer. The assembly of the HslU/HslV complex is dependent on binding of ATP.

It is found in the cytoplasm. In terms of biological role, ATPase subunit of a proteasome-like degradation complex; this subunit has chaperone activity. The binding of ATP and its subsequent hydrolysis by HslU are essential for unfolding of protein substrates subsequently hydrolyzed by HslV. HslU recognizes the N-terminal part of its protein substrates and unfolds these before they are guided to HslV for hydrolysis. The sequence is that of ATP-dependent protease ATPase subunit HslU from Nitrosospira multiformis (strain ATCC 25196 / NCIMB 11849 / C 71).